Here is a 211-residue protein sequence, read N- to C-terminus: Ribonuclease HII (211 aa).

Positions 2 to 211 constitute an RNase H type-2 domain; it reads MLILGVDEAG…TAQRLKASSV (210 aa). A divalent metal cation is bound by residues D8, E9, and D106.

It belongs to the RNase HII family. It depends on Mn(2+) as a cofactor. Requires Mg(2+) as cofactor.

It localises to the cytoplasm. The catalysed reaction is Endonucleolytic cleavage to 5'-phosphomonoester.. Endonuclease that specifically degrades the RNA of RNA-DNA hybrids. This Methanothrix thermoacetophila (strain DSM 6194 / JCM 14653 / NBRC 101360 / PT) (Methanosaeta thermophila) protein is Ribonuclease HII.